Here is a 710-residue protein sequence, read N- to C-terminus: Protein Smaug homolog 1 (710 aa).

Disordered stretches follow at residues 276-319 (ARGS…FQDE) and 441-476 (NQAT…ESDL). The span at 309-318 (QSTACNTFQD) shows a compositional bias: polar residues. The 61-residue stretch at 319–379 (EGSGMKDVPA…KIVISIQKLK (61 aa)) folds into the SAM domain.

It belongs to the SMAUG family.

Its subcellular location is the cytoplasm. It localises to the cell projection. It is found in the dendrite. The protein localises to the synapse. The protein resides in the synaptosome. Functionally, acts as a translational repressor. In Xenopus laevis (African clawed frog), this protein is Protein Smaug homolog 1 (samd4a).